Here is an 880-residue protein sequence, read N- to C-terminus: MDNQELTMPTKYDPSAVEKDRYDYWVNGKFFEAKNDPEKEPYTVVIPPPNVTGKLHLGHAWDSTLQDIVTRMKRMQGYDVLWLPGMDHAGIATQAKVEAKLREEGKTRYDLGREKFLEETWNWKEEYADFIRSQWAKLGLGLDYSRERFTLDEGLSKAVREVFVKLYEKGLIYRGEYIINWDPATKTALSDIEVIYKDVQGAFYHMRYPLKDGSGSIEIATTRPETMLGDTAVAVHPEDERYKHLIGKTVILPITGREIPIVGDDYVDMEFGSGAVKITPAHDPNDFEIGNRHNLERILVMNEDGTMNDNALQYKGMDRFECRKQIVKDLQEEGVLFKIEEHTHSVGHSERSGAVVEPYLSTQWFVQMQPLADAAIELQKSEGKVNFVPDRFEKTYLHWMENIRDWCISRQLWWGHRIPAWYHKETGEIYVGVEAPEDAENWEQDKDVLDTWFSSALWPFSTMGWPDIDEEDFKRYYPTNVLVTGYDIIFFWVSRMIFQGIEFTGERPFKDVLIHGLIRDDQGRKMSKSLGNGVDPMDVIDKYGADSLRYFLATGSSPGQDLRFSFEKVESTWNFANKIWNASRFALMNMDGMTYEELDLSGEKSVADKWILTRLNETIETVTQLADKYEFGEVGRHLYNFIWDDFCDWYIEMAKLPLYGEDEAAKKTTRSILAYVLDQTMRLLHPFMPFLTEEIWQHLPHEGESITVAKWPEAVKEYTDTEAAADMKLLVEVIRAVRNIRSEVNTPLSKQIELYIKTSTPEIAERLEENRSYVERFTNPSLLQIGTDIQAVDKAMTAVVSGAELILPLEGLINIDEEISRLQKELDKLTKEVERVQKKLSNEGFMKKAPAHVIEEERAKEADYTAKREAVEKRIAELKN.

The short motif at 49–59 (PNVTGKLHLGH) is the 'HIGH' region element. The 'KMSKS' region signature appears at 525 to 529 (KMSKS). An ATP-binding site is contributed by K528. The stretch at 809 to 880 (LEGLINIDEE…VEKRIAELKN (72 aa)) forms a coiled coil.

This sequence belongs to the class-I aminoacyl-tRNA synthetase family. ValS type 1 subfamily. Monomer.

It is found in the cytoplasm. It carries out the reaction tRNA(Val) + L-valine + ATP = L-valyl-tRNA(Val) + AMP + diphosphate. Its function is as follows. Catalyzes the attachment of valine to tRNA(Val). As ValRS can inadvertently accommodate and process structurally similar amino acids such as threonine, to avoid such errors, it has a 'posttransfer' editing activity that hydrolyzes mischarged Thr-tRNA(Val) in a tRNA-dependent manner. The protein is Valine--tRNA ligase of Bacillus licheniformis (strain ATCC 14580 / DSM 13 / JCM 2505 / CCUG 7422 / NBRC 12200 / NCIMB 9375 / NCTC 10341 / NRRL NRS-1264 / Gibson 46).